A 25-amino-acid chain; its full sequence is Antimicrobial peptide THP3 (25 aa).

It is found in the secreted. Its function is as follows. Bactericidal activity; inhibits Staphylococcus aureus. In Meleagris gallopavo (Wild turkey), this protein is Antimicrobial peptide THP3.